Consider the following 126-residue polypeptide: Large-conductance mechanosensitive channel (126 aa).

2 consecutive transmembrane segments (helical) span residues 14–34 (VIDLAVGVVIGTAFSAVVNSL) and 66–86 (FITTIVNFLIISAALYFLVVV).

It belongs to the MscL family. In terms of assembly, homopentamer.

It is found in the cell membrane. Its function is as follows. Channel that opens in response to stretch forces in the membrane lipid bilayer. May participate in the regulation of osmotic pressure changes within the cell. This chain is Large-conductance mechanosensitive channel, found in Roseiflexus sp. (strain RS-1).